We begin with the raw amino-acid sequence, 447 residues long: Protein O-GlcNAcase (447 aa).

Residues 1 to 277 (MLTGVIEGFY…TTGAYLADPD (277 aa)) form the GH84 domain. A protein is bound by residues Gly-8, Lys-39, and Asp-115. Asp-116 serves as the catalytic Proton donor. Residues Tyr-160, 219–221 (WDN), Asp-226, and Asn-254 each bind a protein.

This sequence belongs to the glycosyl hydrolase 84 family.

The catalysed reaction is 3-O-(N-acetyl-beta-D-glucosaminyl)-L-seryl-[protein] + H2O = N-acetyl-D-glucosamine + L-seryl-[protein]. It catalyses the reaction 3-O-(N-acetyl-beta-D-glucosaminyl)-L-threonyl-[protein] + H2O = L-threonyl-[protein] + N-acetyl-D-glucosamine. Inhibited by PUGNac (O-(2-acetamido-2-deoxy-D-glucopyranosylidene)amino-N-phenylcarbamate). In terms of biological role, cleaves GlcNAc from O-glycosylated proteins. Can use p-nitrophenyl-beta-GlcNAc and 4-methylumbelliferone-GlcNAc as substrate (in vitro). The polypeptide is Protein O-GlcNAcase (Oceanicola granulosus (strain ATCC BAA-861 / DSM 15982 / KCTC 12143 / HTCC2516)).